Reading from the N-terminus, the 491-residue chain is Probable glycine dehydrogenase (decarboxylating) subunit 2 (491 aa).

Lys-264 carries the post-translational modification N6-(pyridoxal phosphate)lysine.

It belongs to the GcvP family. C-terminal subunit subfamily. As to quaternary structure, the glycine cleavage system is composed of four proteins: P, T, L and H. In this organism, the P 'protein' is a heterodimer of two subunits. The cofactor is pyridoxal 5'-phosphate.

It catalyses the reaction N(6)-[(R)-lipoyl]-L-lysyl-[glycine-cleavage complex H protein] + glycine + H(+) = N(6)-[(R)-S(8)-aminomethyldihydrolipoyl]-L-lysyl-[glycine-cleavage complex H protein] + CO2. Functionally, the glycine cleavage system catalyzes the degradation of glycine. The P protein binds the alpha-amino group of glycine through its pyridoxal phosphate cofactor; CO(2) is released and the remaining methylamine moiety is then transferred to the lipoamide cofactor of the H protein. The protein is Probable glycine dehydrogenase (decarboxylating) subunit 2 of Coxiella burnetii (strain Dugway 5J108-111).